The following is a 307-amino-acid chain: Phosphoribosylaminoimidazole-succinocarboxamide synthase (307 aa).

It belongs to the SAICAR synthetase family.

It carries out the reaction 5-amino-1-(5-phospho-D-ribosyl)imidazole-4-carboxylate + L-aspartate + ATP = (2S)-2-[5-amino-1-(5-phospho-beta-D-ribosyl)imidazole-4-carboxamido]succinate + ADP + phosphate + 2 H(+). The protein operates within purine metabolism; IMP biosynthesis via de novo pathway; 5-amino-1-(5-phospho-D-ribosyl)imidazole-4-carboxamide from 5-amino-1-(5-phospho-D-ribosyl)imidazole-4-carboxylate: step 1/2. This Thermobifida fusca (strain YX) protein is Phosphoribosylaminoimidazole-succinocarboxamide synthase.